The chain runs to 479 residues: Aspartyl/glutamyl-tRNA(Asn/Gln) amidotransferase subunit B (479 aa).

This sequence belongs to the GatB/GatE family. GatB subfamily. As to quaternary structure, heterotrimer of A, B and C subunits.

The enzyme catalyses L-glutamyl-tRNA(Gln) + L-glutamine + ATP + H2O = L-glutaminyl-tRNA(Gln) + L-glutamate + ADP + phosphate + H(+). It carries out the reaction L-aspartyl-tRNA(Asn) + L-glutamine + ATP + H2O = L-asparaginyl-tRNA(Asn) + L-glutamate + ADP + phosphate + 2 H(+). Its function is as follows. Allows the formation of correctly charged Asn-tRNA(Asn) or Gln-tRNA(Gln) through the transamidation of misacylated Asp-tRNA(Asn) or Glu-tRNA(Gln) in organisms which lack either or both of asparaginyl-tRNA or glutaminyl-tRNA synthetases. The reaction takes place in the presence of glutamine and ATP through an activated phospho-Asp-tRNA(Asn) or phospho-Glu-tRNA(Gln). The polypeptide is Aspartyl/glutamyl-tRNA(Asn/Gln) amidotransferase subunit B (Streptococcus pyogenes serotype M12 (strain MGAS2096)).